The sequence spans 917 residues: Isoleucine--tRNA ligase (917 aa).

7 residues coordinate L-isoleucyl-5'-AMP: Pro56, His67, Glu554, Gly555, Asp557, Gln558, and His585. Residues Pro57–His67 carry the 'HIGH' region motif. The 'KMSKS' region signature appears at Lys595–Ser599. An ATP-binding site is contributed by Lys598. TRNA(Ile) is bound by residues Arg632 and Gln640. Cys886, Cys889, Cys906, and Cys909 together coordinate Zn(2+).

This sequence belongs to the class-I aminoacyl-tRNA synthetase family. IleS type 1 subfamily. Monomer. The cofactor is Zn(2+).

It localises to the cytoplasm. It catalyses the reaction tRNA(Ile) + L-isoleucine + ATP = L-isoleucyl-tRNA(Ile) + AMP + diphosphate. In terms of biological role, catalyzes the attachment of isoleucine to tRNA(Ile). As IleRS can inadvertently accommodate and process structurally similar amino acids such as valine, to avoid such errors it has two additional distinct tRNA(Ile)-dependent editing activities. One activity is designated as 'pretransfer' editing and involves the hydrolysis of activated Val-AMP. The other activity is designated 'posttransfer' editing and involves deacylation of mischarged Val-tRNA(Ile). This is Isoleucine--tRNA ligase (ileS) from Staphylococcus aureus.